We begin with the raw amino-acid sequence, 404 residues long: Serine/threonine transporter SstT (404 aa).

A run of 9 helical transmembrane segments spans residues 12-32, 53-73, 81-101, 140-160, 177-197, 216-236, 287-307, 329-349, and 356-376; these read GGNL…LALV, AIAP…KEVG, ILVM…VLSF, ALAN…GIAL, AVSF…FGLV, LGVL…LIVF, VAIP…VTVL, IVAS…LLLI, and FNIP…IGVI.

This sequence belongs to the dicarboxylate/amino acid:cation symporter (DAACS) (TC 2.A.23) family.

The protein localises to the cell inner membrane. It carries out the reaction L-serine(in) + Na(+)(in) = L-serine(out) + Na(+)(out). The enzyme catalyses L-threonine(in) + Na(+)(in) = L-threonine(out) + Na(+)(out). Its function is as follows. Involved in the import of serine and threonine into the cell, with the concomitant import of sodium (symport system). This is Serine/threonine transporter SstT from Actinobacillus pleuropneumoniae serotype 7 (strain AP76).